Consider the following 92-residue polypeptide: Small ribosomal subunit protein uS19 (92 aa).

Belongs to the universal ribosomal protein uS19 family.

Its function is as follows. Protein S19 forms a complex with S13 that binds strongly to the 16S ribosomal RNA. The chain is Small ribosomal subunit protein uS19 from Variovorax paradoxus (strain S110).